The sequence spans 235 residues: MSVHIEAKQGEIAESILLPGDPLRAKYIAETFLEDVTCYNNVRGMLGFTGTYKGKRVSVQGTGMGVPSISIYVNELIQSYGVKNLIRVGTCGAIQKDVKVRDVIIAMTACTDSNMNRLTFPGFDFAPAANFDLLKKAYDAGTEKGLHVRVGNVLTADVFYRESMDMVKKLGDYGVLAVEMETTALYTLAAKYGVNALSVLTVSDHIFTGEETTSEERQTTFNEMIEIALDAAIQQ.

A purine D-ribonucleoside is bound at residue His4. Phosphate is bound by residues Gly20, Arg24, Arg43, and 87-90 (RVGT). A purine D-ribonucleoside is bound by residues Glu162, 179–181 (EME), and 203–204 (SD). Asp204 (proton donor) is an active-site residue.

The protein belongs to the PNP/UDP phosphorylase family. As to quaternary structure, homohexamer; trimer of homodimers.

It catalyses the reaction a purine D-ribonucleoside + phosphate = a purine nucleobase + alpha-D-ribose 1-phosphate. The enzyme catalyses a purine 2'-deoxy-D-ribonucleoside + phosphate = a purine nucleobase + 2-deoxy-alpha-D-ribose 1-phosphate. Functionally, catalyzes the reversible phosphorolytic breakdown of the N-glycosidic bond in the beta-(deoxy)ribonucleoside molecules, with the formation of the corresponding free purine bases and pentose-1-phosphate. The sequence is that of Purine nucleoside phosphorylase DeoD-type from Bacillus anthracis (strain CDC 684 / NRRL 3495).